The following is a 160-amino-acid chain: SsrA-binding protein (160 aa).

The disordered stretch occupies residues 136–160 (KRDTVRERDSNRELQRAVRNKGKED).

Belongs to the SmpB family.

It localises to the cytoplasm. Required for rescue of stalled ribosomes mediated by trans-translation. Binds to transfer-messenger RNA (tmRNA), required for stable association of tmRNA with ribosomes. tmRNA and SmpB together mimic tRNA shape, replacing the anticodon stem-loop with SmpB. tmRNA is encoded by the ssrA gene; the 2 termini fold to resemble tRNA(Ala) and it encodes a 'tag peptide', a short internal open reading frame. During trans-translation Ala-aminoacylated tmRNA acts like a tRNA, entering the A-site of stalled ribosomes, displacing the stalled mRNA. The ribosome then switches to translate the ORF on the tmRNA; the nascent peptide is terminated with the 'tag peptide' encoded by the tmRNA and targeted for degradation. The ribosome is freed to recommence translation, which seems to be the essential function of trans-translation. This Pseudomonas putida (strain W619) protein is SsrA-binding protein.